A 315-amino-acid chain; its full sequence is Homoserine kinase (315 aa).

97–107 (PPARGLGSSAT) lines the ATP pocket.

It belongs to the GHMP kinase family. Homoserine kinase subfamily.

The protein resides in the cytoplasm. It catalyses the reaction L-homoserine + ATP = O-phospho-L-homoserine + ADP + H(+). The protein operates within amino-acid biosynthesis; L-threonine biosynthesis; L-threonine from L-aspartate: step 4/5. Catalyzes the ATP-dependent phosphorylation of L-homoserine to L-homoserine phosphate. This is Homoserine kinase from Prochlorococcus marinus (strain NATL1A).